A 382-amino-acid chain; its full sequence is Chaperone protein DnaJ (382 aa).

The 66-residue stretch at 4-69 (DYYEVLGVSR…DKRRRYDQFG (66 aa)) folds into the J domain. Residues 138–219 (GVEKTIKIKK…CYGEGIKQGE (82 aa)) form a CR-type zinc finger. 8 residues coordinate Zn(2+): Cys151, Cys154, Cys167, Cys170, Cys193, Cys196, Cys207, and Cys210. 4 CXXCXGXG motif repeats span residues 151–158 (CKECNGSG), 167–174 (CPTCHGAG), 193–200 (CPTCGGEG), and 207–214 (CPSCYGEG).

Belongs to the DnaJ family. Homodimer. Requires Zn(2+) as cofactor.

It is found in the cytoplasm. In terms of biological role, participates actively in the response to hyperosmotic and heat shock by preventing the aggregation of stress-denatured proteins and by disaggregating proteins, also in an autonomous, DnaK-independent fashion. Unfolded proteins bind initially to DnaJ; upon interaction with the DnaJ-bound protein, DnaK hydrolyzes its bound ATP, resulting in the formation of a stable complex. GrpE releases ADP from DnaK; ATP binding to DnaK triggers the release of the substrate protein, thus completing the reaction cycle. Several rounds of ATP-dependent interactions between DnaJ, DnaK and GrpE are required for fully efficient folding. Also involved, together with DnaK and GrpE, in the DNA replication of plasmids through activation of initiation proteins. The sequence is that of Chaperone protein DnaJ from Chlorobium luteolum (strain DSM 273 / BCRC 81028 / 2530) (Pelodictyon luteolum).